The primary structure comprises 765 residues: Cyanobacterial phytochrome A (765 aa).

The chromophore binding domain stretch occupies residues 20 to 510 (IHLSGQIQPH…RKAIVNIVLR (491 aa)). The GAF domain occupies 152-320 (NLRDFCQIIV…VIFAEISARE (169 aa)). C259 contacts a tetrapyrrole. Positions 535-748 (VASHDLQEPL…TFYFTIPVGG (214 aa)) constitute a Histidine kinase domain. H538 is modified (phosphohistidine; by autocatalysis).

This sequence in the N-terminal section; belongs to the phytochrome family. Contains one covalently linked tetrapyrrole chromophore.

The enzyme catalyses ATP + protein L-histidine = ADP + protein N-phospho-L-histidine.. Functionally, photoreceptor which exists in two forms that are reversibly interconvertible by light: the R form that absorbs maximally in the red region of the spectrum and the FR form that absorbs maximally in the far-red region. In Nostoc sp. (strain PCC 7120 / SAG 25.82 / UTEX 2576), this protein is Cyanobacterial phytochrome A (aphA).